Here is a 93-residue protein sequence, read N- to C-terminus: Small ribosomal subunit protein uS19 (93 aa).

The protein belongs to the universal ribosomal protein uS19 family.

In terms of biological role, protein S19 forms a complex with S13 that binds strongly to the 16S ribosomal RNA. In Nitratidesulfovibrio vulgaris (strain ATCC 29579 / DSM 644 / CCUG 34227 / NCIMB 8303 / VKM B-1760 / Hildenborough) (Desulfovibrio vulgaris), this protein is Small ribosomal subunit protein uS19.